The following is a 199-amino-acid chain: dITP/XTP pyrophosphatase (199 aa).

Residue 8-13 coordinates substrate; that stretch reads TSNINK. Residue aspartate 68 is the Proton acceptor of the active site. Aspartate 68 serves as a coordination point for Mg(2+). Substrate contacts are provided by residues serine 69, 155-158, lysine 177, and 182-183; these read FGYD and HR.

This sequence belongs to the HAM1 NTPase family. In terms of assembly, homodimer. Mg(2+) serves as cofactor.

The enzyme catalyses XTP + H2O = XMP + diphosphate + H(+). It catalyses the reaction dITP + H2O = dIMP + diphosphate + H(+). It carries out the reaction ITP + H2O = IMP + diphosphate + H(+). Its function is as follows. Pyrophosphatase that catalyzes the hydrolysis of nucleoside triphosphates to their monophosphate derivatives, with a high preference for the non-canonical purine nucleotides XTP (xanthosine triphosphate), dITP (deoxyinosine triphosphate) and ITP. Seems to function as a house-cleaning enzyme that removes non-canonical purine nucleotides from the nucleotide pool, thus preventing their incorporation into DNA/RNA and avoiding chromosomal lesions. This chain is dITP/XTP pyrophosphatase, found in Borrelia duttonii (strain Ly).